The chain runs to 432 residues: Dihydroorotase (432 aa).

Residues histidine 60 and histidine 62 each contribute to the Zn(2+) site. Substrate contacts are provided by residues 62–64 (HLR) and asparagine 94. Zn(2+) contacts are provided by aspartate 152, histidine 179, and histidine 232. Asparagine 278 contributes to the substrate binding site. Residue aspartate 305 participates in Zn(2+) binding. Residue aspartate 305 is part of the active site. Residues histidine 309 and 323–324 (FG) each bind substrate.

The protein belongs to the metallo-dependent hydrolases superfamily. DHOase family. Class I DHOase subfamily. Zn(2+) is required as a cofactor.

The enzyme catalyses (S)-dihydroorotate + H2O = N-carbamoyl-L-aspartate + H(+). Its pathway is pyrimidine metabolism; UMP biosynthesis via de novo pathway; (S)-dihydroorotate from bicarbonate: step 3/3. Catalyzes the reversible cyclization of carbamoyl aspartate to dihydroorotate. This is Dihydroorotase from Elusimicrobium minutum (strain Pei191).